The primary structure comprises 1112 residues: Electrogenic sodium bicarbonate cotransporter 4 (1112 aa).

The span at 1-13 (MKVEEKAGVKKLE) shows a compositional bias: basic and acidic residues. Disordered regions lie at residues 1–80 (MKVE…SSLG), 220–255 (KKPI…HHST), and 439–469 (GRSG…NEAE). Residues 1-513 (MKVEEKAGVK…DFYDGFHIQS (513 aa)) lie on the Cytoplasmic side of the membrane. Composition is skewed to polar residues over residues 53–67 (QRVQ…SQQD) and 233–244 (SVSTTNRSSARS). Residues 444 to 465 (SAGGGGSGGGAGGSGAGGGGSG) show a composition bias toward gly residues. Residues 514–536 (ISAVLFIYLGCITNAITFGGLLG) form a helical membrane-spanning segment. Residues 537 to 547 (DATDNYQGVME) are Extracellular-facing. The helical transmembrane segment at 548-579 (SFLGTAMAGSLFCLFSGQPLIILSSTGPILIF) threads the bilayer. The Cytoplasmic portion of the chain corresponds to 580–598 (EKLLFDFSKANGLDYMEFR). A helical membrane pass occupies residues 599 to 620 (LWIGLHSAIQCLILVATDASFI). Residues 621–734 (IKYITRFTEE…LGSSCQFVPD (114 aa)) lie on the Extracellular side of the membrane. Residues 735–753 (LALMSFILFFGTYSMTLTL) form a helical membrane-spanning segment. The Cytoplasmic segment spans residues 754–772 (KKFKFSRYFPTKVRTLVAD). A helical membrane pass occupies residues 773–792 (FSIVFSILLFCGIDACFGLQ). At 793-820 (TPKLHVPNVIKPTRPDRGWFVAPFGKNP) the chain is on the extracellular side. The chain crosses the membrane as a helical span at residues 821-839 (WWVYPASILPALLVTILIF). Topologically, residues 840 to 858 (MDQQITAVIVNRKENKLRK) are cytoplasmic. The helical transmembrane segment at 859–875 (AAGYHLDLFWVGILMAL) threads the bilayer. Residues 876 to 880 (CSFMG) are Extracellular-facing. A helical transmembrane segment spans residues 881-900 (LPWYVAATVISIAHIDSLKM). Residues 901–920 (ETETSAPGEQPQFLGVREQR) lie on the Cytoplasmic side of the membrane. A helical transmembrane segment spans residues 921–940 (VTGVMVFILTGISVFLAPIL). Topologically, residues 941 to 945 (KYIPM) are extracellular. The chain crosses the membrane as a helical span at residues 946–966 (PVLYGVFLYMGVASLNGIQFW). The Cytoplasmic portion of the chain corresponds to 967–992 (DRCKLFLMPAKHQPDHAFLRHVPLRR). Residues 993–1010 (IHLFTLVQILCLALLWIL) traverse the membrane as a helical segment. At 1011-1015 (KSTMA) the chain is on the extracellular side. The helical transmembrane segment at 1016–1033 (AIIFPVMILGLIIVRRLL) threads the bilayer. Over 1034-1112 (DLIFSQHDLA…KRSSSWSHSL (79 aa)) the chain is Cytoplasmic. Positions 1055-1074 (KESDRKKRRKEVHENTDKEP) are enriched in basic and acidic residues. The tract at residues 1055-1112 (KESDRKKRRKEVHENTDKEPQFLPPSVVKIPMEGIPSDPQNGIHCVGRKRSSSWSHSL) is disordered.

It belongs to the anion exchanger (TC 2.A.31) family. Observed in hepatocytes and in the apical region of bile duct intrahepatic cholangiocytes of liver. Also observed in uroepithelium cells lining the outer pelvic wall of the kidney (at protein level). Highly expressed in colon, distal colon, liver, kidney and testis. Moderate expression in duodenum and stomach and weak expression in heart. In kidney, very weakly expressed in the inner medulla, but abundantly expressed in cortex and outer medulla in the medullary thick ascending and cortical thick ascending limbs of the loop of Henle.

The protein localises to the basolateral cell membrane. The protein resides in the apical cell membrane. The catalysed reaction is 2 hydrogencarbonate(out) + Na(+)(out) = 2 hydrogencarbonate(in) + Na(+)(in). The enzyme catalyses 3 hydrogencarbonate(out) + Na(+)(out) = 3 hydrogencarbonate(in) + Na(+)(in). Mediates sodium- and bicarbonate-dependent electrogenic sodium bicarbonate cotransport, with a Na(+):HCO3(-) stoichiometry varying from 1:2 to 1:3. This Rattus norvegicus (Rat) protein is Electrogenic sodium bicarbonate cotransporter 4.